The primary structure comprises 225 residues: Uridylate kinase (225 aa).

Residue 9-10 (GS) coordinates ATP. Gly-44 serves as a coordination point for UMP. Gly-45 and Arg-49 together coordinate ATP. UMP is bound by residues Asp-66 and 114 to 120 (THPGHTT). Residues Thr-140, Asn-141, Tyr-146, and Asp-149 each contribute to the ATP site.

Belongs to the UMP kinase family. Homohexamer.

The protein resides in the cytoplasm. It catalyses the reaction UMP + ATP = UDP + ADP. It participates in pyrimidine metabolism; CTP biosynthesis via de novo pathway; UDP from UMP (UMPK route): step 1/1. Its activity is regulated as follows. Inhibited by UTP. Catalyzes the reversible phosphorylation of UMP to UDP. In Pyrococcus abyssi (strain GE5 / Orsay), this protein is Uridylate kinase.